Consider the following 1812-residue polypeptide: Putative surface cell antigen sca2 (1812 aa).

Residues 1–17 (MSTCLLTSSFLSTSARA) form the signal peptide. Polar residues-rich tracts occupy residues 344–357 (FLNN…STGR) and 371–382 (MSNQSIHNTGTS). Disordered stretches follow at residues 344-382 (FLNN…TGTS), 648-691 (LEQT…QGFS), and 1338-1462 (KQEN…KKDV). The span at 656-685 (PNPPPLPLNGGIPNPPPLPLNGSMPPPPPL) shows a compositional bias: pro residues. Composition is skewed to basic and acidic residues over residues 1349 to 1367 (STKD…EQSD) and 1382 to 1393 (SKNDKSSDDKKS). Positions 1401–1416 (DEDDTGYATDEEELEE) are enriched in acidic residues. A compositionally biased stretch (low complexity) spans 1417–1455 (SNSTTNEELEESNSTTNEELEESNSTTNEELEESNSTTN). The region spanning 1533–1812 (ETSINRGVWI…QGLIKLKVNL (280 aa)) is the Autotransporter domain.

The protein localises to the cell outer membrane. This Rickettsia sibirica (strain ATCC VR-151 / 246) protein is Putative surface cell antigen sca2 (sca2).